Here is a 180-residue protein sequence, read N- to C-terminus: MSRIGKAPVIFDNTVQVSVSPANEVVVKGAKSSLTIGMKPNVSAKIDGNKVVLTPNDDTKESRAMHGLYRALIQNAVTGVTKGFSRGLELQGVGYRANVAGKKLELSLGFSHPVIFDIPEGIEIKVEKQTSLTVNGPSKELVGQVAAKIRSFRPPEPYLGKGVRYAGEQIRRKAGKSAGK.

The protein belongs to the universal ribosomal protein uL6 family. In terms of assembly, part of the 50S ribosomal subunit.

This protein binds to the 23S rRNA, and is important in its secondary structure. It is located near the subunit interface in the base of the L7/L12 stalk, and near the tRNA binding site of the peptidyltransferase center. In Bdellovibrio bacteriovorus (strain ATCC 15356 / DSM 50701 / NCIMB 9529 / HD100), this protein is Large ribosomal subunit protein uL6.